A 377-amino-acid polypeptide reads, in one-letter code: Putative glutamate--cysteine ligase 2 (377 aa).

Belongs to the glutamate--cysteine ligase type 2 family. YbdK subfamily.

The enzyme catalyses L-cysteine + L-glutamate + ATP = gamma-L-glutamyl-L-cysteine + ADP + phosphate + H(+). In terms of biological role, ATP-dependent carboxylate-amine ligase which exhibits weak glutamate--cysteine ligase activity. The sequence is that of Putative glutamate--cysteine ligase 2 from Ralstonia pickettii (strain 12J).